The sequence spans 479 residues: Bifunctional aspartate aminotransferase and glutamate/aspartate-prephenate aminotransferase (479 aa).

The transit peptide at 1-79 (MAATTTTSSS…VEVDISLSPR (79 aa)) directs the protein to the chloroplast. G111 provides a ligand contact to L-aspartate. A pyridoxal 5'-phosphate-binding site is contributed by 172–173 (AK). L-aspartate is bound by residues W197 and N247. Pyridoxal 5'-phosphate-binding positions include N247, Y279, and 307–309 (GFS). K310 carries the post-translational modification N6-(pyridoxal phosphate)lysine. Residue R318 participates in pyridoxal 5'-phosphate binding. R449 lines the L-aspartate pocket.

It belongs to the class-I pyridoxal-phosphate-dependent aminotransferase family. As to quaternary structure, homodimer. The cofactor is pyridoxal 5'-phosphate. In terms of tissue distribution, expressed in flowers, pistils, stamens, ovaries and at lower levels in leaves and sepals.

It is found in the plastid. It localises to the chloroplast. It carries out the reaction L-aspartate + 2-oxoglutarate = oxaloacetate + L-glutamate. The catalysed reaction is L-arogenate + oxaloacetate = prephenate + L-aspartate. The enzyme catalyses L-arogenate + 2-oxoglutarate = prephenate + L-glutamate. It functions in the pathway amino-acid biosynthesis; L-phenylalanine biosynthesis; L-arogenate from prephenate (L-Asp route): step 1/1. Its pathway is amino-acid biosynthesis; L-phenylalanine biosynthesis; L-arogenate from prephenate (L-Glu route): step 1/1. Its function is as follows. Prokaryotic-type aspartate aminotransferase. Also has a prenate transaminase activity. Involved in the aromatic amino acids biosynthesis pathway via the arogenate route. Required for the transamination of prephenate into arogenate. Can use 2-oxoglutarate, oxaloacetate and prephenate as substrates, but not phenylpyruvate or 4-hydroxyphenylpyruvate. The polypeptide is Bifunctional aspartate aminotransferase and glutamate/aspartate-prephenate aminotransferase (Petunia hybrida (Petunia)).